We begin with the raw amino-acid sequence, 149 residues long: Large ribosomal subunit protein bL9 (149 aa).

This sequence belongs to the bacterial ribosomal protein bL9 family.

In terms of biological role, binds to the 23S rRNA. The sequence is that of Large ribosomal subunit protein bL9 from Persephonella marina (strain DSM 14350 / EX-H1).